The primary structure comprises 429 residues: DNA dC-&gt;dU-editing enzyme APOBEC3 (429 aa).

2 CMP/dCMP-type deaminase domains span residues 38–154 and 238–357; these read DRKD…AQVA and EEEF…LCSL. Residue His71 participates in Zn(2+) binding. The active-site Proton donor is the Glu73. Positions 105, 108, 288, 316, and 319 each coordinate Zn(2+).

It belongs to the cytidine and deoxycytidylate deaminase family. Homodimer. Zn(2+) serves as cofactor.

It is found in the cytoplasm. It catalyses the reaction a 2'-deoxycytidine in single-stranded DNA + H2O + H(+) = a 2'-deoxyuridine in single-stranded DNA + NH4(+). In terms of biological role, DNA deaminase (cytidine deaminase) which acts as an inhibitor of retrovirus replication and retrotransposon mobility via deaminase-dependent and -independent mechanisms. Selectively targets single-stranded DNA and does not deaminate double-stranded DNA or single- or double-stranded RNA. This chain is DNA dC-&gt;dU-editing enzyme APOBEC3 (Apobec3), found in Rattus norvegicus (Rat).